We begin with the raw amino-acid sequence, 209 residues long: 60S ribosomal subunit assembly/export protein loc-1 (209 aa).

Disordered stretches follow at residues 1–53 (MAPT…SKGR) and 135–209 (REAR…AAPE). Basic and acidic residues-rich tracts occupy residues 20–33 (GSKD…DGVL) and 135–159 (REAR…TKDS). Residues 126 to 170 (IKARQMEEIREARRAEAEKKEAERKARLEETKDSLRKKRKRSKQS) are a coiled coil.

It belongs to the LOC1 family. Component of the 66S pre-ribosomal particle.

Its subcellular location is the nucleus. It is found in the nucleolus. In terms of biological role, required for efficient assembly and nuclear export of the 60S ribosomal subunit. This chain is 60S ribosomal subunit assembly/export protein loc-1 (loc-1), found in Neurospora crassa (strain ATCC 24698 / 74-OR23-1A / CBS 708.71 / DSM 1257 / FGSC 987).